The following is a 226-amino-acid chain: PKHD-type hydroxylase PSPA7_5129 (226 aa).

Residues 78–178 (KVFPPLFNCY…RYASFFWTQS (101 aa)) enclose the Fe2OG dioxygenase domain. H96, D98, and H159 together coordinate Fe cation. R169 is a binding site for 2-oxoglutarate.

Fe(2+) is required as a cofactor. The cofactor is L-ascorbate.

The protein is PKHD-type hydroxylase PSPA7_5129 of Pseudomonas paraeruginosa (strain DSM 24068 / PA7) (Pseudomonas aeruginosa (strain PA7)).